The primary structure comprises 345 residues: Skn-1 dependent zygotic transcript 15 protein (345 aa).

Residues A11–V55 form the F-box domain.

Its function is as follows. May have a role in embryogenesis. The sequence is that of Skn-1 dependent zygotic transcript 15 protein (sdz-15) from Caenorhabditis elegans.